The sequence spans 269 residues: Tryptophan synthase alpha chain (269 aa).

Active-site proton acceptor residues include Glu56 and Asp67.

The protein belongs to the TrpA family. Tetramer of two alpha and two beta chains.

It carries out the reaction (1S,2R)-1-C-(indol-3-yl)glycerol 3-phosphate + L-serine = D-glyceraldehyde 3-phosphate + L-tryptophan + H2O. The protein operates within amino-acid biosynthesis; L-tryptophan biosynthesis; L-tryptophan from chorismate: step 5/5. Functionally, the alpha subunit is responsible for the aldol cleavage of indoleglycerol phosphate to indole and glyceraldehyde 3-phosphate. This is Tryptophan synthase alpha chain from Mycobacterium marinum (strain ATCC BAA-535 / M).